We begin with the raw amino-acid sequence, 898 residues long: Phosphoenolpyruvate carboxylase (898 aa).

Catalysis depends on residues His-138 and Lys-561.

The protein belongs to the PEPCase type 1 family. The cofactor is Mg(2+).

The enzyme catalyses oxaloacetate + phosphate = phosphoenolpyruvate + hydrogencarbonate. Functionally, forms oxaloacetate, a four-carbon dicarboxylic acid source for the tricarboxylic acid cycle. The protein is Phosphoenolpyruvate carboxylase of Streptococcus suis (strain 98HAH33).